The primary structure comprises 434 residues: Adenylosuccinate synthetase (434 aa).

Residues 22-28 and 50-52 each bind GTP; these read GDEGKGK and GHT. Asp23 functions as the Proton acceptor in the catalytic mechanism. Residues Asp23 and Gly50 each coordinate Mg(2+). Residues 23–26, 48–51, Thr139, Arg153, Gln234, Thr249, and Arg313 each bind IMP; these read DEGK and NAGH. Residue His51 is the Proton donor of the active site. 309–315 is a binding site for substrate; the sequence is ATTGRKR. GTP is bound by residues Arg315, 341–343, and 423–425; these read KLD and SVG.

It belongs to the adenylosuccinate synthetase family. Homodimer. Requires Mg(2+) as cofactor.

Its subcellular location is the cytoplasm. The catalysed reaction is IMP + L-aspartate + GTP = N(6)-(1,2-dicarboxyethyl)-AMP + GDP + phosphate + 2 H(+). It participates in purine metabolism; AMP biosynthesis via de novo pathway; AMP from IMP: step 1/2. In terms of biological role, plays an important role in the de novo pathway of purine nucleotide biosynthesis. Catalyzes the first committed step in the biosynthesis of AMP from IMP. In Chlorobium luteolum (strain DSM 273 / BCRC 81028 / 2530) (Pelodictyon luteolum), this protein is Adenylosuccinate synthetase.